A 274-amino-acid polypeptide reads, in one-letter code: Putative 2-succinyl-6-hydroxy-2,4-cyclohexadiene-1-carboxylate synthase (274 aa).

One can recognise an AB hydrolase-1 domain in the interval 26-259; it reads AVVCLHGFTG…KAGHTVHVEQ (234 aa).

The protein belongs to the AB hydrolase superfamily. MenH family. In terms of assembly, monomer.

It catalyses the reaction 5-enolpyruvoyl-6-hydroxy-2-succinyl-cyclohex-3-ene-1-carboxylate = (1R,6R)-6-hydroxy-2-succinyl-cyclohexa-2,4-diene-1-carboxylate + pyruvate. Its pathway is quinol/quinone metabolism; 1,4-dihydroxy-2-naphthoate biosynthesis; 1,4-dihydroxy-2-naphthoate from chorismate: step 3/7. The protein operates within quinol/quinone metabolism; menaquinone biosynthesis. Its function is as follows. Catalyzes a proton abstraction reaction that results in 2,5-elimination of pyruvate from 2-succinyl-5-enolpyruvyl-6-hydroxy-3-cyclohexene-1-carboxylate (SEPHCHC) and the formation of 2-succinyl-6-hydroxy-2,4-cyclohexadiene-1-carboxylate (SHCHC). This is Putative 2-succinyl-6-hydroxy-2,4-cyclohexadiene-1-carboxylate synthase from Bacillus subtilis (strain 168).